The sequence spans 295 residues: Shikimate dehydrogenase (NADP(+)) (295 aa).

Residues 24 to 26 (SRS) and Thr-71 contribute to the shikimate site. The active-site Proton acceptor is Lys-75. Position 87 (Glu-87) interacts with NADP(+). Asn-96 and Asp-111 together coordinate shikimate. Residues 136-140 (GAGGA), 160-165 (NRTASR), and Met-233 contribute to the NADP(+) site. Tyr-235 serves as a coordination point for shikimate. Position 256 (Gly-256) interacts with NADP(+).

It belongs to the shikimate dehydrogenase family. Homodimer.

It catalyses the reaction shikimate + NADP(+) = 3-dehydroshikimate + NADPH + H(+). It participates in metabolic intermediate biosynthesis; chorismate biosynthesis; chorismate from D-erythrose 4-phosphate and phosphoenolpyruvate: step 4/7. Involved in the biosynthesis of the chorismate, which leads to the biosynthesis of aromatic amino acids. Catalyzes the reversible NADPH linked reduction of 3-dehydroshikimate (DHSA) to yield shikimate (SA). This chain is Shikimate dehydrogenase (NADP(+)), found in Cupriavidus taiwanensis (strain DSM 17343 / BCRC 17206 / CCUG 44338 / CIP 107171 / LMG 19424 / R1) (Ralstonia taiwanensis (strain LMG 19424)).